We begin with the raw amino-acid sequence, 101 residues long: Acylphosphatase-1 (101 aa).

Position 2 is an N-acetylserine (Ser2). Ser2 carries the N-acetylalanine modification. Residues 11–101 (SVDYEVFGKV…LDYSDFQIVK (91 aa)) enclose the Acylphosphatase-like domain. Active-site residues include Arg26 and Asn44.

This sequence belongs to the acylphosphatase family. In terms of tissue distribution, organ-common type isozyme is found in many different tissues.

The enzyme catalyses an acyl phosphate + H2O = a carboxylate + phosphate + H(+). The protein is Acylphosphatase-1 (ACYP1) of Sus scrofa (Pig).